Consider the following 111-residue polypeptide: Elevenin (111 aa).

The N-terminal stretch at 1–24 is a signal peptide; it reads MAPSQKALLVLVLSMLLTASDSRA. C29 and C38 form a disulfide bridge. A propeptide spanning residues 44-111 is cleaved from the precursor; the sequence is KRGGDSLSVG…TEQLDRLLTL (68 aa).

Belongs to the elevenin family. Monomer. Expressed by the venom duct.

The protein localises to the secreted. Its function is as follows. May mimic the function of prey elevenin neuropeptide. In vivo, intracranial injection in mice induces hyperactivity. The protein is Elevenin of Conus ebraeus (Hebrew cone).